The primary structure comprises 526 residues: Cytochrome P450 monooxygenase patI (526 aa).

Residues 1–6 lie on the Cytoplasmic side of the membrane; sequence MDILQL. Residues 7-29 form a helical membrane-spanning segment; it reads APTHLLAILLSSTSALFLITYLL. The Lumenal portion of the chain corresponds to 30–526; sequence RAGHRPSDLP…EAQEVFARFD (497 aa). Asn-81 is a glycosylation site (N-linked (GlcNAc...) asparagine). Cys-446 contacts heme.

This sequence belongs to the cytochrome P450 family. It depends on heme as a cofactor.

It localises to the endoplasmic reticulum membrane. It carries out the reaction 3-hydroxybenzyl alcohol + reduced [NADPH--hemoprotein reductase] + O2 = gentisyl alcohol + oxidized [NADPH--hemoprotein reductase] + H2O + H(+). It functions in the pathway mycotoxin biosynthesis; patulin biosynthesis. Cytochrome P450 monooxygenase; part of the gene cluster that mediates the biosynthesis of patulin, an acetate-derived tetraketide mycotoxin produced by several fungal species that shows antimicrobial properties against several bacteria. PatI catalyzes the conversion of m-hydroxybenzyl alcohol into gentisyl alcohol. The pathway begins with the synthesis of 6-methylsalicylic acid by the polyketide synthase (PKS) patK via condensation of acetate and malonate units. The 6-methylsalicylic acid decarboxylase patG then catalyzes the decarboxylation of 6-methylsalicylic acid to yield m-cresol (also known as 3-methylphenol). These first reactions occur in the cytosol. The intermediate m-cresol is then transported into the endoplasmic reticulum where the cytochrome P450 monooxygenase patH converts it to m-hydroxybenzyl alcohol, which is further converted to gentisyl alcohol by the cytochrome P450 monooxygenase patI. The oxidoreductases patJ and patO further convert gentisyl alcohol to isoepoxydon in the vacuole. PatN catalyzes then the transformation of isoepoxydon into phyllostine. The cluster protein patF is responsible for the conversion from phyllostine to neopatulin whereas the alcohol dehydrogenase patD converts neopatulin to E-ascladiol. The steps between isoepoxydon and E-ascladiol occur in the cytosol, and E-ascladiol is probably secreted to the extracellular space by one of the cluster-specific transporters patC or patM. Finally, the secreted patulin synthase patE catalyzes the conversion of E-ascladiol to patulin. This chain is Cytochrome P450 monooxygenase patI, found in Penicillium expansum (Blue mold rot fungus).